Reading from the N-terminus, the 211-residue chain is Large ribosomal subunit protein eL13 (211 aa).

Belongs to the eukaryotic ribosomal protein eL13 family. As to quaternary structure, component of the 60S large ribosomal subunit (LSU).

It is found in the cytoplasm. Component of the ribosome, a large ribonucleoprotein complex responsible for the synthesis of proteins in the cell. The small ribosomal subunit (SSU) binds messenger RNAs (mRNAs) and translates the encoded message by selecting cognate aminoacyl-transfer RNA (tRNA) molecules. The large subunit (LSU) contains the ribosomal catalytic site termed the peptidyl transferase center (PTC), which catalyzes the formation of peptide bonds, thereby polymerizing the amino acids delivered by tRNAs into a polypeptide chain. The nascent polypeptides leave the ribosome through a tunnel in the LSU and interact with protein factors that function in enzymatic processing, targeting, and the membrane insertion of nascent chains at the exit of the ribosomal tunnel. As part of the LSU, it is probably required for its formation and the maturation of rRNAs. In Gallus gallus (Chicken), this protein is Large ribosomal subunit protein eL13 (RPL13).